The primary structure comprises 369 residues: Transcription initiation factor IIA large subunit (369 aa).

Composition is skewed to polar residues over residues 113–210 and 218–233; these read HGNS…QNSP and TESS…NDVP. Residues 113-248 are disordered; sequence HGNSNYYSPP…IHDLDDAGSP (136 aa). The residue at position 249 (Ser-249) is a Phosphoserine. Residues 282 to 319 are disordered; it reads IEDNEDEKKPPVDTPSDEAINSDLDDPDSDEAPETEEG. Positions 304–319 are enriched in acidic residues; that stretch reads DLDDPDSDEAPETEEG.

It belongs to the TFIIA subunit 1 family. In terms of assembly, TFIIA is a heterodimer of the large subunit and the small subunit gamma.

The protein resides in the nucleus. In terms of biological role, TFIIA is a component of the transcription machinery of RNA polymerase II and plays an important role in transcriptional activation. TFIIA in a complex with tbp mediates transcriptional activity. This chain is Transcription initiation factor IIA large subunit, found in Schizosaccharomyces pombe (strain 972 / ATCC 24843) (Fission yeast).